We begin with the raw amino-acid sequence, 257 residues long: Small ribosomal subunit protein eS1 (257 aa).

The disordered stretch occupies residues 236–257 (TSAEGEKIERPDDYEPPVQESV). Basic and acidic residues predominate over residues 239-248 (EGEKIERPDD).

The protein belongs to the eukaryotic ribosomal protein eS1 family. As to quaternary structure, component of the small ribosomal subunit. Mature ribosomes consist of a small (40S) and a large (60S) subunit. The 40S subunit contains about 33 different proteins and 1 molecule of RNA (18S). The 60S subunit contains about 49 different proteins and 3 molecules of RNA (28S, 5.8S and 5S).

Its subcellular location is the cytoplasm. The sequence is that of Small ribosomal subunit protein eS1 from Brugia malayi (Filarial nematode worm).